The primary structure comprises 351 residues: Biotin synthase (351 aa).

Residues 44 to 262 (NRVQVSTLLS…LAVARIMMPK (219 aa)) form the Radical SAM core domain. Positions 59, 63, and 66 each coordinate [4Fe-4S] cluster. [2Fe-2S] cluster-binding residues include C103, C134, C194, and R266.

It belongs to the radical SAM superfamily. Biotin synthase family. In terms of assembly, homodimer. [4Fe-4S] cluster is required as a cofactor. The cofactor is [2Fe-2S] cluster.

The enzyme catalyses (4R,5S)-dethiobiotin + (sulfur carrier)-SH + 2 reduced [2Fe-2S]-[ferredoxin] + 2 S-adenosyl-L-methionine = (sulfur carrier)-H + biotin + 2 5'-deoxyadenosine + 2 L-methionine + 2 oxidized [2Fe-2S]-[ferredoxin]. It participates in cofactor biosynthesis; biotin biosynthesis; biotin from 7,8-diaminononanoate: step 2/2. Catalyzes the conversion of dethiobiotin (DTB) to biotin by the insertion of a sulfur atom into dethiobiotin via a radical-based mechanism. The polypeptide is Biotin synthase (Stutzerimonas stutzeri (strain A1501) (Pseudomonas stutzeri)).